The chain runs to 115 residues: UPF0125 protein VP0646 (115 aa).

The interval 92 to 115 (RAEQAKAAGNADPVTGGKPNALRK) is disordered.

Belongs to the UPF0125 (RnfH) family.

This Vibrio parahaemolyticus serotype O3:K6 (strain RIMD 2210633) protein is UPF0125 protein VP0646.